The following is a 286-amino-acid chain: Pantothenate synthetase (286 aa).

An ATP-binding site is contributed by 30-37 (MGNLHRGH). The active-site Proton donor is the His-37. (R)-pantoate is bound at residue Gln-61. Gln-61 lines the beta-alanine pocket. Residue 149–152 (GEKD) coordinates ATP. Gln-155 lines the (R)-pantoate pocket. Residues Val-178 and 186 to 189 (LSSR) contribute to the ATP site.

It belongs to the pantothenate synthetase family. In terms of assembly, homodimer.

The protein localises to the cytoplasm. It carries out the reaction (R)-pantoate + beta-alanine + ATP = (R)-pantothenate + AMP + diphosphate + H(+). The protein operates within cofactor biosynthesis; (R)-pantothenate biosynthesis; (R)-pantothenate from (R)-pantoate and beta-alanine: step 1/1. Its function is as follows. Catalyzes the condensation of pantoate with beta-alanine in an ATP-dependent reaction via a pantoyl-adenylate intermediate. The protein is Pantothenate synthetase of Nitrosococcus oceani (strain ATCC 19707 / BCRC 17464 / JCM 30415 / NCIMB 11848 / C-107).